The chain runs to 792 residues: Probable phosphoketolase (792 aa).

It belongs to the XFP family. It depends on thiamine diphosphate as a cofactor.

This chain is Probable phosphoketolase, found in Brucella melitensis biotype 1 (strain ATCC 23456 / CCUG 17765 / NCTC 10094 / 16M).